Reading from the N-terminus, the 589-residue chain is Serine/threonine-protein phosphatase 2A 65 kDa regulatory subunit A alpha isoform (589 aa).

The residue at position 2 (alanine 2) is an N-acetylalanine. 15 HEAT repeats span residues 8-46 (DSLYPIAVLIDELRNEDVQLRLNSIKKLSTIALALGVER), 47-84 (TRSELLPFLTDTIYDEDEVLLALAEQLGTFTTLVGGPE), 85-123 (YVHCLLPPLESLATVEETVVRDKAVESLRAISHEHSPSD), 124-161 (LEAHFVPLVKRLAGGDWFTSRTSACGLFSVCYPRVSSA), 162-200 (VKAELRQYFRNLCSDDTPMVRRAAASKLGEFAKVLELDN), 201-239 (VKSEIIPMFSNLASDEQDSVRLLAVEACVNIAQLLPQED), 240-278 (LEALVMPTLRQAAEDKSWRVRYMVADKFTELHKAVGPEI), 279-321 (TKTD…RENV), 322-360 (IMTQILPCIKELVSDANQHVKSALASVIMGLSPILGKDS), 361-399 (TIEHLLPLFLAQLKDECPEVRLNIISNLDCVNEVIGIRQ), 400-438 (LSQSLLPAIVELAEDAKWRVRLAIIEYMPLLAGQLGVEF), 439-477 (FDEKLNSLCMAWLVDHVYAIREAATSNLKKLVEKFGKEW), 478-516 (AHATIIPKVLAMSGDPNYLHRMTTLFCINVLSEVCGQDI), 517-555 (TTKHMLPTVLRMAGDPVANVRFNVAKSLQKIGPILDNST), and 556-589 (LQSEVKPVLEKLTQDQDVDVKYFAQEALTVLSLA). The interval 8–399 (DSLYPIAVLI…CVNEVIGIRQ (392 aa)) is PP2A subunit B binding. The polyoma small and medium T antigens Binding stretch occupies residues 47 to 321 (TRSELLPFLT…NLSADCRENV (275 aa)). Positions 85 to 239 (YVHCLLPPLE…NIAQLLPQED (155 aa)) are SV40 small T antigen binding. At lysine 280 the chain carries N6-acetyllysine. Positions 400–589 (LSQSLLPAIV…QEALTVLSLA (190 aa)) are PP2A subunit C binding.

Belongs to the phosphatase 2A regulatory subunit A family. PP2A consists of a common heterodimeric core enzyme, composed of PPP2CA a 36 kDa catalytic subunit (subunit C) and PPP2R1A a 65 kDa constant regulatory subunit (PR65 or subunit A), that associates with a variety of regulatory subunits. Proteins that associate with the core dimer include three families of regulatory subunits B (the R2/B/PR55/B55, R3/B''/PR72/PR130/PR59 and R5/B'/B56 families), the 48 kDa variable regulatory subunit, viral proteins, and cell signaling molecules. Found in a complex with at least ARL2, PPP2CB, PPP2R1A, PPP2R2A, PPP2R5E and TBCD. Interacts with the PP2A C catalytic subunit PPP2CA. Interacts with the PP2A B subunit PPP2R2A. Interacts with the PP2A B subunit PPP2R5D. Interacts with FOXO1; the interaction dephosphorylates FOXO1 on AKT-mediated phosphorylation sites. Interacts with IPO9. Interacts with TP53 and SGO1. Interacts with PLA2G16; this interaction might decrease PP2A activity. Interacts with CTTNBP2NL. Interacts with GNA12; the interaction promotes protein phosphatase 2A activation causing dephosphorylation of MAPT. Interacts with CIP2A; this interaction stabilizes CIP2A. Interacts with PABIR1/FAM122A. Interacts with ADCY8; antagonizes interaction between ADCY8 and calmodulin. Interacts with CRTC3 (when phosphorylated at 'Ser-391'). Interacts with SPRY2. Part of the core of STRIPAK complexes composed of PP2A catalytic and scaffolding subunits, the striatins (PP2A regulatory subunits), the striatin-associated proteins MOB4, STRIP1 and STRIP2, PDCD10 and members of the STE20 kinases, such as STK24 and STK26. Component of the Integrator-PP2A (INTAC) complex, composed of the Integrator core complex and protein phosphatase 2A subunits PPP2CA and PPP2R1A.

The protein resides in the cytoplasm. It localises to the nucleus. Its subcellular location is the chromosome. The protein localises to the centromere. It is found in the lateral cell membrane. The protein resides in the cell projection. It localises to the dendrite. In terms of biological role, the PR65 subunit of protein phosphatase 2A serves as a scaffolding molecule to coordinate the assembly of the catalytic subunit and a variable regulatory B subunit. Upon interaction with GNA12 promotes dephosphorylation of microtubule associated protein TAU/MAPT. Required for proper chromosome segregation and for centromeric localization of SGO1 in mitosis. Together with RACK1 adapter, mediates dephosphorylation of AKT1 at 'Ser-473', preventing AKT1 activation and AKT-mTOR signaling pathway. Dephosphorylation of AKT1 is essential for regulatory T-cells (Treg) homeostasis and stability. Part of the striatin-interacting phosphatase and kinase (STRIPAK) complexes. STRIPAK complexes have critical roles in protein (de)phosphorylation and are regulators of multiple signaling pathways including Hippo, MAPK, nuclear receptor and cytoskeleton remodeling. Different types of STRIPAK complexes are involved in a variety of biological processes such as cell growth, differentiation, apoptosis, metabolism and immune regulation. Key mediator of a quality checkpoint during transcription elongation as part of the Integrator-PP2A (INTAC) complex. The INTAC complex drives premature transcription termination of transcripts that are unfavorably configured for transcriptional elongation: within the INTAC complex, acts as a scaffolding subunit for PPP2CA, which catalyzes dephosphorylation of the C-terminal domain (CTD) of Pol II subunit POLR2A/RPB1 and SUPT5H/SPT5, thereby preventing transcriptional elongation. Regulates the recruitment of the SKA complex to kinetochores. The chain is Serine/threonine-protein phosphatase 2A 65 kDa regulatory subunit A alpha isoform (PPP2R1A) from Bos taurus (Bovine).